The primary structure comprises 67 residues: Small ribosomal subunit protein bS21 (67 aa).

The protein belongs to the bacterial ribosomal protein bS21 family.

This is Small ribosomal subunit protein bS21 from Acidiphilium cryptum (strain JF-5).